The primary structure comprises 236 residues: Phosphoribosylaminoimidazole-succinocarboxamide synthase (236 aa).

The protein belongs to the SAICAR synthetase family.

The catalysed reaction is 5-amino-1-(5-phospho-D-ribosyl)imidazole-4-carboxylate + L-aspartate + ATP = (2S)-2-[5-amino-1-(5-phospho-beta-D-ribosyl)imidazole-4-carboxamido]succinate + ADP + phosphate + 2 H(+). It functions in the pathway purine metabolism; IMP biosynthesis via de novo pathway; 5-amino-1-(5-phospho-D-ribosyl)imidazole-4-carboxamide from 5-amino-1-(5-phospho-D-ribosyl)imidazole-4-carboxylate: step 1/2. This is Phosphoribosylaminoimidazole-succinocarboxamide synthase from Cellvibrio japonicus (strain Ueda107) (Pseudomonas fluorescens subsp. cellulosa).